The chain runs to 195 residues: Imidazoleglycerol-phosphate dehydratase (195 aa).

Belongs to the imidazoleglycerol-phosphate dehydratase family.

It localises to the cytoplasm. It catalyses the reaction D-erythro-1-(imidazol-4-yl)glycerol 3-phosphate = 3-(imidazol-4-yl)-2-oxopropyl phosphate + H2O. It participates in amino-acid biosynthesis; L-histidine biosynthesis; L-histidine from 5-phospho-alpha-D-ribose 1-diphosphate: step 6/9. In Parafrankia sp. (strain EAN1pec), this protein is Imidazoleglycerol-phosphate dehydratase.